Here is a 322-residue protein sequence, read N- to C-terminus: GDSL esterase/lipase At5g03600 (322 aa).

Ser21 acts as the Nucleophile in catalysis. Catalysis depends on residues Asp295 and His298.

It belongs to the 'GDSL' lipolytic enzyme family.

The protein is GDSL esterase/lipase At5g03600 of Arabidopsis thaliana (Mouse-ear cress).